Here is a 26-residue protein sequence, read N- to C-terminus: Fumarylacetoacetate hydrolase domain-containing protein 2A (26 aa).

Belongs to the FAH family. Ca(2+) serves as cofactor. It depends on Mg(2+) as a cofactor.

In terms of biological role, may have hydrolase activity. The chain is Fumarylacetoacetate hydrolase domain-containing protein 2A from Mesocricetus auratus (Golden hamster).